A 448-amino-acid polypeptide reads, in one-letter code: DNA repair protein RadA (448 aa).

A C4-type zinc finger spans residues Cys-10 to Cys-27. Gly-96–Ser-103 contacts ATP. Residues Lys-253 to Gly-257 carry the RadA KNRFG motif motif. The interval Asp-351–Met-448 is lon-protease-like.

This sequence belongs to the RecA family. RadA subfamily.

In terms of biological role, DNA-dependent ATPase involved in processing of recombination intermediates, plays a role in repairing DNA breaks. Stimulates the branch migration of RecA-mediated strand transfer reactions, allowing the 3' invading strand to extend heteroduplex DNA faster. Binds ssDNA in the presence of ADP but not other nucleotides, has ATPase activity that is stimulated by ssDNA and various branched DNA structures, but inhibited by SSB. Does not have RecA's homology-searching function. This Helicobacter pylori (strain J99 / ATCC 700824) (Campylobacter pylori J99) protein is DNA repair protein RadA.